The sequence spans 237 residues: Ribitol-5-phosphate cytidylyltransferase (237 aa).

Residues 7 to 10, 81 to 87, and Ser-112 contribute to the CTP site; these read LAGG and GSDRNES.

Belongs to the IspD/TarI cytidylyltransferase family. TarI subfamily.

It carries out the reaction D-ribitol 5-phosphate + CTP + H(+) = CDP-L-ribitol + diphosphate. The protein operates within cell wall biogenesis; poly(ribitol phosphate) teichoic acid biosynthesis. Catalyzes the transfer of the cytidylyl group of CTP to D-ribitol 5-phosphate. The sequence is that of Ribitol-5-phosphate cytidylyltransferase from Bacillus spizizenii (strain ATCC 23059 / NRRL B-14472 / W23) (Bacillus subtilis subsp. spizizenii).